Reading from the N-terminus, the 794-residue chain is Glutamine--tRNA ligase (794 aa).

The interval 192–217 (DNEKPKKKKEKPAKVEDKAAPVATSE) is disordered. Residues 277–287 (PEPNGYLHIGH) carry the 'HIGH' region motif. Residues 278–280 (EPN) and 284–290 (HIGHAKA) each bind ATP. Asp-310 and Tyr-450 together coordinate L-glutamine. ATP is bound by residues Thr-469, 498 to 499 (RL), and 506 to 508 (MSK). The 'KMSKS' region motif lies at 505–509 (VMSKR).

This sequence belongs to the class-I aminoacyl-tRNA synthetase family.

The catalysed reaction is tRNA(Gln) + L-glutamine + ATP = L-glutaminyl-tRNA(Gln) + AMP + diphosphate. In Lupinus luteus (European yellow lupine), this protein is Glutamine--tRNA ligase.